Reading from the N-terminus, the 828-residue chain is Periplasmic nitrate reductase (828 aa).

The segment at residues Met-1–Ala-31 is a signal peptide (tat-type signal). The 4Fe-4S Mo/W bis-MGD-type domain occupies Ile-39–Asp-95. The [4Fe-4S] cluster site is built by Cys-46, Cys-49, Cys-53, and Cys-81. Mo-bis(molybdopterin guanine dinucleotide) is bound by residues Lys-83, Gln-150, Asn-175, Cys-179, Trp-212–Met-219, Ser-243–His-247, Gln-262–Asp-264, Met-372, Gln-376, Asn-482, Ser-508–Asp-509, Lys-531, Asp-558, and Thr-718–Thr-727. Phe-794 serves as a coordination point for substrate. Positions 802 and 819 each coordinate Mo-bis(molybdopterin guanine dinucleotide).

This sequence belongs to the prokaryotic molybdopterin-containing oxidoreductase family. NasA/NapA/NarB subfamily. Component of the periplasmic nitrate reductase NapAB complex composed of NapA and NapB. [4Fe-4S] cluster is required as a cofactor. Requires Mo-bis(molybdopterin guanine dinucleotide) as cofactor. Post-translationally, predicted to be exported by the Tat system. The position of the signal peptide cleavage has not been experimentally proven.

It is found in the periplasm. It carries out the reaction 2 Fe(II)-[cytochrome] + nitrate + 2 H(+) = 2 Fe(III)-[cytochrome] + nitrite + H2O. In terms of biological role, catalytic subunit of the periplasmic nitrate reductase complex NapAB. Receives electrons from NapB and catalyzes the reduction of nitrate to nitrite. This Shigella flexneri serotype 5b (strain 8401) protein is Periplasmic nitrate reductase.